The sequence spans 186 residues: Ribonuclease HII (186 aa).

Positions 2–186 constitute an RNase H type-2 domain; sequence KILAGVDEVG…KTFSPISDLL (185 aa). Positions 8, 9, and 99 each coordinate a divalent metal cation.

It belongs to the RNase HII family. It depends on Mn(2+) as a cofactor. The cofactor is Mg(2+).

It localises to the cytoplasm. It catalyses the reaction Endonucleolytic cleavage to 5'-phosphomonoester.. Endonuclease that specifically degrades the RNA of RNA-DNA hybrids. The chain is Ribonuclease HII from Pelagibacter ubique (strain HTCC1062).